A 104-amino-acid polypeptide reads, in one-letter code: Precursor of CEP11 (104 aa).

Positions 1–27 (MAKTRRVIYLFLTIVLLFCELIDEAQG) are cleaved as a signal peptide. A propeptide spanning residues 28-85 (SRFRCHHSEDYSCKKRSSHHHHHHHHHQQQQHHHKDTPPEELQGSIKTRRSKDIYGLN) is cleaved from the precursor. A disordered region spans residues 37–104 (DYSCKKRSSH…SPGVGHLIKT (68 aa)). Residues 41–62 (KKRSSHHHHHHHHHQQQQHHHK) are compositionally biased toward basic residues. Residues Pro-92 and Pro-96 each carry the hydroxyproline modification. The propeptide occupies 101–104 (LIKT).

Belongs to the C-terminally encoded plant signaling peptide (CEP) family. In terms of assembly, interacts with CEP receptors (e.g. CEPR1 and CEPR2). Post-translationally, the mature small signaling peptide is generated by proteolytic processing of the longer precursor. As to expression, expressed in lateral root primordia and in lateral roots excluding the meristem region.

It localises to the secreted. The protein localises to the extracellular space. Its subcellular location is the apoplast. In terms of biological role, extracellular signaling peptide that may regulate primary root growth rate and systemic nitrogen (N)-demand signaling. Mediates up-regulation of genes involved in N uptake and assimilation pathways. This Arabidopsis thaliana (Mouse-ear cress) protein is Precursor of CEP11.